The sequence spans 315 residues: Solute carrier family 25 member 32 (315 aa).

Solcar repeat units lie at residues 20–109 (HVRY…IKSY), 118–209 (LEAT…LKLK), and 222–306 (LSTV…VSHF). The next 6 helical transmembrane spans lie at 26 to 43 (LVAGVSGGVLSNLALHPL), 89 to 106 (VWGAGLSWGLYFFFYNAI), 123 to 143 (YLVSAAEAGAMTLCITNPLWV), 186 to 203 (FVPGLFGTSHGALQFMAY), 227 to 243 (YISVAALSKIFAVAATY), and 281 to 300 (GIAPNLIRVTPACCITFVVY).

The protein belongs to the mitochondrial carrier (TC 2.A.29) family.

It is found in the mitochondrion inner membrane. It carries out the reaction FAD(in) = FAD(out). Facilitates flavin adenine dinucleotide (FAD) translocation across the mitochondrial inner membrane into the mitochondrial matrix where it acts as a redox cofactor to assist flavoenzyme activities in fundamental metabolic processes including fatty acid beta-oxidation, amino acid and choline metabolism as well as mitochondrial electron transportation. In particular, provides FAD to DLD dehydrogenase of the glycine cleavage system, part of mitochondrial one-carbon metabolic pathway involved in neural tube closure in early embryogenesis. This chain is Solute carrier family 25 member 32, found in Macaca fascicularis (Crab-eating macaque).